The primary structure comprises 700 residues: Phenoloxidase 8 (700 aa).

Positions 1-51 (MATLTQKFHGLLQHPLEPLFLPKNDGTLFYDLPERFLTSRYSPIGQNLANR) are excised as a propeptide. N-linked (GlcNAc...) asparagine glycans are attached at residues Asn64 and Asn198. 3 residues coordinate Cu cation: His223, His227, and His252. N-linked (GlcNAc...) asparagine glycosylation is present at Asn295. The active-site Proton acceptor is Glu364. Residues His379, His383, and His419 each coordinate Cu cation. N-linked (GlcNAc...) asparagine glycosylation is found at Asn445, Asn507, and Asn565. Intrachain disulfides connect Cys592/Cys636 and Cys594/Cys643.

This sequence belongs to the tyrosinase family. As to quaternary structure, homodimer. The cofactor is Cu(2+). Upon activation, a trypsin type protease cleaves prophenol oxidase to yield the active enzyme.

Its subcellular location is the secreted. The enzyme catalyses 2 tyramine + O2 = 2 dopamine. It carries out the reaction 2 dopamine + O2 = 2 dopamine quinone + 2 H2O. Its function is as follows. This is a copper-containing oxidase that functions in the formation of pigments such as melanins and other polyphenolic compounds. Catalyzes the oxidation of o-diphenols such as dopamine. Also oxidizes monophenols such as tyramine. In Anopheles gambiae (African malaria mosquito), this protein is Phenoloxidase 8.